The following is a 473-amino-acid chain: Ribulose bisphosphate carboxylase large chain (473 aa).

Residues N116 and T166 each contribute to the substrate site. The Proton acceptor role is filled by K168. Position 170 (K170) interacts with substrate. Positions 194, 196, and 197 each coordinate Mg(2+). The residue at position 194 (K194) is an N6-carboxylysine. The active-site Proton acceptor is the H287. 3 residues coordinate substrate: R288, H320, and S372.

The protein belongs to the RuBisCO large chain family. Type I subfamily. Heterohexadecamer of 8 large chains and 8 small chains. Requires Mg(2+) as cofactor.

It carries out the reaction 2 (2R)-3-phosphoglycerate + 2 H(+) = D-ribulose 1,5-bisphosphate + CO2 + H2O. The enzyme catalyses D-ribulose 1,5-bisphosphate + O2 = 2-phosphoglycolate + (2R)-3-phosphoglycerate + 2 H(+). Its function is as follows. RuBisCO catalyzes two reactions: the carboxylation of D-ribulose 1,5-bisphosphate, the primary event in carbon dioxide fixation, as well as the oxidative fragmentation of the pentose substrate. Both reactions occur simultaneously and in competition at the same active site. This Halorhodospira halophila (strain DSM 244 / SL1) (Ectothiorhodospira halophila (strain DSM 244 / SL1)) protein is Ribulose bisphosphate carboxylase large chain.